The sequence spans 664 residues: Serine/threonine-protein kinase PknD (664 aa).

Residues methionine 1–alanine 381 are Cytoplasmic-facing. The Protein kinase domain occupies tyrosine 15–leucine 276. ATP is bound by residues leucine 21–valine 29 and lysine 44. Threonine 135 is subject to Phosphothreonine; by autocatalysis. Aspartate 138 (proton acceptor) is an active-site residue. Phosphothreonine; by autocatalysis occurs at positions 169, 171, 173, and 209. Residues threonine 303–alanine 333 form a disordered region. The chain crosses the membrane as a helical span at residues valine 382–leucine 402. The Extracellular segment spans residues arginine 403–serine 664. NHL repeat units lie at residues glutamine 414–glycine 456, serine 457–glycine 497, serine 498–glycine 539, serine 540–glutamate 581, serine 582–glycine 623, and serine 624–serine 664.

This sequence belongs to the protein kinase superfamily. Ser/Thr protein kinase family. As to quaternary structure, homodimer. The extracellular domain interacts with host laminin. Post-translationally, autophosphorylated. Dephosphorylated by PstP.

Its subcellular location is the cell membrane. The enzyme catalyses L-seryl-[protein] + ATP = O-phospho-L-seryl-[protein] + ADP + H(+). The catalysed reaction is L-threonyl-[protein] + ATP = O-phospho-L-threonyl-[protein] + ADP + H(+). Its activity is regulated as follows. Dimerization activates the kinase domain of unphosphorylated PknD via an allosteric mechanism, triggering autophosphorylation and phosphorylation of target proteins. Phosphorylated PknD is fully active even in the absence of dimerization. In terms of biological role, part of a signaling pathway that enables adaptation to osmotic stress through cell wall remodeling and virulence factor production. Its function is as follows. Key microbial factor required for central nervous system tuberculosis. Required for invasion of host brain endothelia, but not macrophages, lung epithelia or other endothelia. This chain is Serine/threonine-protein kinase PknD (pknD), found in Mycobacterium tuberculosis (strain CDC 1551 / Oshkosh).